The sequence spans 433 residues: Chaperone SurA (433 aa).

A signal peptide spans 1 to 24 (MKYRIKALLLASSLIITTITSVQA). 2 consecutive PpiC domains span residues 175-276 (NVEY…KVLD) and 285-384 (VEEV…KLED).

Its subcellular location is the periplasm. It catalyses the reaction [protein]-peptidylproline (omega=180) = [protein]-peptidylproline (omega=0). Functionally, chaperone involved in the correct folding and assembly of outer membrane proteins. Recognizes specific patterns of aromatic residues and the orientation of their side chains, which are found more frequently in integral outer membrane proteins. May act in both early periplasmic and late outer membrane-associated steps of protein maturation. This Colwellia psychrerythraea (strain 34H / ATCC BAA-681) (Vibrio psychroerythus) protein is Chaperone SurA.